A 374-amino-acid chain; its full sequence is MSLLLDNLQYTIPTFLFLLTLLVFVHEMGHYLVGRWSGIRILAFSVGFGPELFGWTDRHGTRWKFCAVPLGGYVKFFGDEDAASTPDYRRLETIAPEERGRTFLGAKLWKRAATVAAGPIANFLLAIAIFAVLFSIYGRAVADPVVAFVAPDSAAEKAGVLPGDRLLSIDGKPIATFDDVRRYVSVRPELPITVRIEREGAAIDLPMVPQRTESVDPLGNKMEEGKIGIGTNQEAGNFRVETYGPLEAVGQGALQSWRIVTGTLDYLSNLFVGRMSADQVGGPIRIAQMSGQMAKLGIAEVLNFAAVLSVSIGLLNLMPVPVLDGGHLMFYAVEALRGRPVGPAAQDLAFRIGFAMVLMLTVFAAWNDINWLFG.

Histidine 26 provides a ligand contact to Zn(2+). The active site involves glutamate 27. A Zn(2+)-binding site is contributed by histidine 30. The next 4 helical transmembrane spans lie at 36 to 55 (WSGIRILAFSVGFGPELFGW), 112 to 134 (AATVAAGPIANFLLAIAIFAVLF), 301 to 323 (VLNFAAVLSVSIGLLNLMPVPVL), and 348 to 367 (LAFRIGFAMVLMLTVFAAWN). A PDZ domain is found at 126–199 (AIAIFAVLFS…LPITVRIERE (74 aa)).

The protein belongs to the peptidase M50B family. Requires Zn(2+) as cofactor.

The protein resides in the cell inner membrane. The protein is Putative zinc metalloprotease R01501 of Rhizobium meliloti (strain 1021) (Ensifer meliloti).